Here is a 675-residue protein sequence, read N- to C-terminus: Protein PALS1 (675 aa).

Residues 1–345 are required for the correct localization of PALS1 and PATJ at cell-cell contacts and the normal formation of tight junctions and adherens junctions; sequence MTTSYMNGHV…QQIKPPPAKE (345 aa). Residues serine 14 and serine 25 each carry the phosphoserine modification. Positions 21-140 are interaction with PARD6B; the sequence is LDLASPEEYP…LKHIQHTLVD (120 aa). The tract at residues 51–79 is disordered; it reads RRSAQLERIRQQQEDMRRRREEEGKKQEL. Positions 54 to 79 are enriched in basic and acidic residues; the sequence is AQLERIRQQQEDMRRRREEEGKKQEL. Serine 83 and serine 84 each carry phosphoserine. L27 domains lie at 120-177 and 179-235; these read NILD…SKAS and PFPL…MQLE. Positions 181–243 are interaction with LIN7C; it reads PLIANVQDLV…LEPITDERVY (63 aa). A PDZ domain is found at 256-336; it reads IVRIEKARDI…TLTFVLIPSQ (81 aa). Positions 345–417 constitute an SH3 domain; sequence ETVIHVKAHF…PGKSFQQQRE (73 aa). The region spanning 479-660 is the Guanylate kinase-like domain; it reads KRPIILIGPQ…AYQELLRLIN (182 aa). Residue 486–493 participates in ATP binding; it reads GPQNCGQN.

The protein belongs to the MAGUK family. Heterodimer with MPP1. Forms a heterotrimeric complex composed of PALS1, LIN7B and PATJ; the N-terminal L27 domain of PALS1 interacts with the L27 domain of PATJ and the C-terminal L27 domain of PALS1 interacts with the L27 domain of LIN7B. Component of a complex composed of PALS1, CRB1 and MPP4. Component of a complex whose core is composed of ARHGAP17, AMOT, PALS1, PATJ and PARD3/PAR3. Component of a complex composed of PALS1, CRB1 and EPB41L5. Within the complex, interacts (via HOOK domain) with EPB41L5 (via FERM domain), and interacts with CRB1 (via intracellular domain). Component of a complex composed of PALS1, MPP3 and CRB1; PALS1 acts as a bridging protein between MPP3 (via guanylate kinase-like domain) and CRB1. Component of a complex composed of CRB3, PALS1 and PATJ. As part of the Crumbs complex; interacts with WWP1, the interaction is enhanced by AMOTL2 and facilitates WWP1 localization to the plasma membrane. The Crumbs complex promotes monoubiquitination of AMOTL2 by WWP1, which activates the Hippo signaling pathway. Interacts (via PDZ domain) with PATJ (via N-terminus). Interacts with EZR. Interacts (via PDZ domain) with CRB1 (via C-terminal ERLI motif). While the PDZ domain is sufficient for interaction with CRB1, the adjacent SH3 and guanylate kinase-like domains are likely to contribute to a high affinity interaction. Interacts with WWTR1/TAZ (via WW domain). Interacts with MPP7. Interacts (via PDZ domain) with CRB3 (via C-terminus). Interacts with LIN7C. Interacts with MPDZ. Interacts with PARD6B. Interacts with SC6A1. Interacts with CDH5; the interaction promotes PALS1 localization to cell junctions and is required for CDH5-mediated vascular lumen formation and endothelial cell. Interacts with NPHP1 (via coiled coil and SH3 domains). Interacts with NPHP4. Interacts with CRB2. Expressed in the retinal pigment epithelium (at protein level). Expressed in the vascular plexus of the retina (at protein level). In the brain, expressed in the dentate gyrus of hippocampus, striatum and cerebellum (at protein level). Expressed in the sciatic nerve (at protein level). Expressed in the kidney nephron (at protein level). Expressed in the lung, and heart. Expressed in placenta, brain, skeletal muscles, pancreas and liver.

It is found in the golgi apparatus. The protein resides in the cell membrane. The protein localises to the endomembrane system. Its subcellular location is the cell junction. It localises to the tight junction. It is found in the adherens junction. The protein resides in the cell projection. The protein localises to the axon. Its subcellular location is the perikaryon. It localises to the apical cell membrane. Its function is as follows. Plays a role in tight junction biogenesis and in the establishment of cell polarity in epithelial cells. Also involved in adherens junction biogenesis by ensuring correct localization of the exocyst complex protein EXOC4/SEC8 which allows trafficking of adherens junction structural component CDH1 to the cell surface. Plays a role through its interaction with CDH5 in vascular lumen formation and endothelial membrane polarity. Required during embryonic and postnatal retinal development. Required for the maintenance of cerebellar progenitor cells in an undifferentiated proliferative state, preventing premature differentiation, and is required for cerebellar histogenesis, fissure formation, cerebellar layer organization and cortical development. Plays a role in neuronal progenitor cell survival, potentially via promotion of mTOR signaling. Plays a role in the radial and longitudinal extension of the myelin sheath in Schwann cells. May modulate SC6A1/GAT1-mediated GABA uptake by stabilizing the transporter. May play a role in the T-cell receptor-mediated activation of NF-kappa-B. Required for localization of EZR to the apical membrane of parietal cells and may play a role in the dynamic remodeling of the apical cytoskeleton. Required for the normal polarized localization of the vesicular marker STX4. Required for the correct trafficking of the myelin proteins PMP22 and MAG. Involved in promoting phosphorylation and cytoplasmic retention of transcriptional coactivators YAP1 and WWTR1/TAZ which leads to suppression of TGFB1-dependent transcription of target genes such as CCN2/CTGF, SERPINE1/PAI1, SNAI1/SNAIL1 and SMAD7. This is Protein PALS1 from Mus musculus (Mouse).